The sequence spans 1483 residues: Rho GTPase-activating protein 23 (1483 aa).

Residues 15-34 (PEPRPPQLPLGPRDGCSSGR) form a disordered region. In terms of domain architecture, PDZ spans 71–155 (HCILKEEENG…TLELSIMPKD (85 aa)). Disordered stretches follow at residues 212–276 (ISAL…PGSR) and 300–345 (AGER…GQEG). Over residues 316-325 (SQDRLEDVTT) the composition is skewed to basic and acidic residues. Residues 331–342 (CSTSQDALSQLG) are compositionally biased toward polar residues. Phosphoserine is present on residues Ser-361 and Ser-372. Positions 385-407 (PSARTSACPSRDLTQAPPPSGLQ) are disordered. Phosphoserine is present on Ser-421. Disordered regions lie at residues 448–485 (SLAQ…DHRD) and 508–527 (NLGF…RLGR). Phosphoserine is present on residues Ser-515, Ser-579, Ser-607, and Ser-619. A Phosphothreonine modification is found at Thr-652. A phosphoserine mark is found at Ser-655, Ser-658, and Ser-673. The 121-residue stretch at 684 to 804 (DIRREGWLYY…WIRAIRENSR (121 aa)) folds into the PH domain. Residues 827-848 (KVSHSSGPKADSSPKGSRGLGG) form a disordered region. Lys-850 participates in a covalent cross-link: Glycyl lysine isopeptide (Lys-Gly) (interchain with G-Cter in SUMO2). Disordered stretches follow at residues 860–879 (RGLR…VAAP), 1093–1150 (FSDD…SWVP), 1171–1361 (KRKK…GSRP), and 1419–1469 (ELGG…LQGL). One can recognise a Rho-GAP domain in the interval 901–1093 (IRLEECQPAT…TLIQHSDWFF (193 aa)). Basic and acidic residues predominate over residues 1099–1110 (KGERTPVDDKEP). Composition is skewed to polar residues over residues 1133-1144 (GSDSTTCSSAKS) and 1236-1248 (SIVS…STMD). Positions 1338–1351 (GSASSSSQESLRPP) are enriched in low complexity. Positions 1440-1457 (SGLSSLESTKARASSAAS) are enriched in polar residues.

Its function is as follows. GTPase activator for the Rho-type GTPases by converting them to an inactive GDP-bound state. This chain is Rho GTPase-activating protein 23 (Arhgap23), found in Mus musculus (Mouse).